The primary structure comprises 458 residues: UDP-N-acetylmuramoylalanine--D-glutamate ligase (458 aa).

124–130 (GSDGKTT) serves as a coordination point for ATP.

This sequence belongs to the MurCDEF family.

It localises to the cytoplasm. It carries out the reaction UDP-N-acetyl-alpha-D-muramoyl-L-alanine + D-glutamate + ATP = UDP-N-acetyl-alpha-D-muramoyl-L-alanyl-D-glutamate + ADP + phosphate + H(+). Its pathway is cell wall biogenesis; peptidoglycan biosynthesis. Cell wall formation. Catalyzes the addition of glutamate to the nucleotide precursor UDP-N-acetylmuramoyl-L-alanine (UMA). This is UDP-N-acetylmuramoylalanine--D-glutamate ligase from Clostridium perfringens (strain 13 / Type A).